A 1027-amino-acid polypeptide reads, in one-letter code: Kinesin heavy chain isoform 5A (1027 aa).

N-acetylalanine is present on Ala2. The Kinesin motor domain occupies 9–327 (SIKVLCRFRP…LMFGQRAKTI (319 aa)). An ATP-binding site is contributed by 86 to 93 (GQTSSGKT). The tract at residues 174 to 315 (VSSPEEILDV…PSSYNDAETK (142 aa)) is microtubule-binding. Residues 271–361 (EGTKSYVPYR…KTKAQKETIA (91 aa)) are necessary for interaction with ZFYVE27. A coiled-coil region spans residues 331-906 (ASVNLELTAE…VDRIKEAVRY (576 aa)). Residues 353 to 1027 (TKAQKETIAK…FPLHQETAAS (675 aa)) are interaction with BICD2. Thr397 is subject to Phosphothreonine. A disordered region spans residues 906–937 (YKSSGKRGHSAQIAKPVRPGHYPASSPTNPYG). The tract at residues 907 to 1027 (KSSGKRGHSA…FPLHQETAAS (121 aa)) is globular.

This sequence belongs to the TRAFAC class myosin-kinesin ATPase superfamily. Kinesin family. Kinesin subfamily. In terms of assembly, oligomer composed of two heavy chains and two light chains. Interacts with GRIP1. Interacts with FMR1 (via C-terminus); this interaction is increased in a mGluR-dependent manner. Interacts with BORCS5. Interacts with ZFYVE27. Interacts with VAPA, VAPB, SURF4, RAB11A (GDP-bound form), RAB11B (GDP-bound form) and RTN3 in a ZFYVE27-dependent manner. Interacts with BICD2. Interacts with DTNB.

It localises to the cytoplasm. The protein localises to the perinuclear region. The protein resides in the cytoskeleton. It is found in the perikaryon. The enzyme catalyses ATP + H2O + a kinesin associated with a microtubule at position (n) = ADP + phosphate a kinesin associated with a microtubule at position (n+1, toward the plus end).. In terms of biological role, microtubule-dependent motor required for slow axonal transport of neurofilament proteins (NFH, NFM and NFL). Can induce formation of neurite-like membrane protrusions in non-neuronal cells in a ZFYVE27-dependent manner. The ZFYVE27-KIF5A complex contributes to the vesicular transport of VAPA, VAPB, SURF4, RAB11A, RAB11B and RTN3 proteins in neurons. Required for anterograde axonal transportation of MAPK8IP3/JIP3 which is essential for MAPK8IP3/JIP3 function in axon elongation. The sequence is that of Kinesin heavy chain isoform 5A (Kif5a) from Mus musculus (Mouse).